A 502-amino-acid polypeptide reads, in one-letter code: Probable cytosol aminopeptidase (502 aa).

Residues Lys269 and Asp274 each contribute to the Mn(2+) site. Lys281 is an active-site residue. Residues Asp292, Asp351, and Glu353 each coordinate Mn(2+). Arg355 is a catalytic residue.

The protein belongs to the peptidase M17 family. Mn(2+) serves as cofactor.

It is found in the cytoplasm. The catalysed reaction is Release of an N-terminal amino acid, Xaa-|-Yaa-, in which Xaa is preferably Leu, but may be other amino acids including Pro although not Arg or Lys, and Yaa may be Pro. Amino acid amides and methyl esters are also readily hydrolyzed, but rates on arylamides are exceedingly low.. The enzyme catalyses Release of an N-terminal amino acid, preferentially leucine, but not glutamic or aspartic acids.. Presumably involved in the processing and regular turnover of intracellular proteins. Catalyzes the removal of unsubstituted N-terminal amino acids from various peptides. The polypeptide is Probable cytosol aminopeptidase (Aliivibrio fischeri (strain MJ11) (Vibrio fischeri)).